The primary structure comprises 75 residues: UPF0346 protein LSL_0716 (75 aa).

This sequence belongs to the UPF0346 family.

The protein is UPF0346 protein LSL_0716 of Ligilactobacillus salivarius (strain UCC118) (Lactobacillus salivarius).